The sequence spans 957 residues: Bifunctional glutamine synthetase adenylyltransferase/adenylyl-removing enzyme (957 aa).

Residues 1–447 (MFSQLDFTGL…IFNQLIGEEE (447 aa)) are adenylyl removase. Residues 454 to 957 (VNEQLAIWQD…IWQQIFTDNE (504 aa)) form an adenylyl transferase region.

The protein belongs to the GlnE family. Requires Mg(2+) as cofactor.

The enzyme catalyses [glutamine synthetase]-O(4)-(5'-adenylyl)-L-tyrosine + phosphate = [glutamine synthetase]-L-tyrosine + ADP. It carries out the reaction [glutamine synthetase]-L-tyrosine + ATP = [glutamine synthetase]-O(4)-(5'-adenylyl)-L-tyrosine + diphosphate. Functionally, involved in the regulation of glutamine synthetase GlnA, a key enzyme in the process to assimilate ammonia. When cellular nitrogen levels are high, the C-terminal adenylyl transferase (AT) inactivates GlnA by covalent transfer of an adenylyl group from ATP to specific tyrosine residue of GlnA, thus reducing its activity. Conversely, when nitrogen levels are low, the N-terminal adenylyl removase (AR) activates GlnA by removing the adenylyl group by phosphorolysis, increasing its activity. The regulatory region of GlnE binds the signal transduction protein PII (GlnB) which indicates the nitrogen status of the cell. The polypeptide is Bifunctional glutamine synthetase adenylyltransferase/adenylyl-removing enzyme (Haemophilus ducreyi (strain 35000HP / ATCC 700724)).